The primary structure comprises 76 residues: Heat shock factor-binding protein 1 (76 aa).

The protein belongs to the HSBP1 family. In terms of assembly, homohexamer. Associates with heptad repeats of HSF1 trimers and probably also HSF1 monomers, and with HSP70. Association with HSF1 trimers and HSP70 coincides with attenuation of heat shock response and the conversion of HSF1 trimer to monomer.

It localises to the nucleus. Negative regulator of the heat shock response. Negatively affects HSF1 DNA-binding activity. May have a role in the suppression of the activation of the stress response during the aging process. This Pongo abelii (Sumatran orangutan) protein is Heat shock factor-binding protein 1 (HSBP1).